The chain runs to 192 residues: NADH-quinone oxidoreductase subunit C (192 aa).

The interval 170–192 is disordered; sequence LGGIPVEYKGATVPPPDERRQYA.

Belongs to the complex I 30 kDa subunit family. In terms of assembly, NDH-1 is composed of 14 different subunits. Subunits NuoB, C, D, E, F, and G constitute the peripheral sector of the complex.

It is found in the cell membrane. It catalyses the reaction a quinone + NADH + 5 H(+)(in) = a quinol + NAD(+) + 4 H(+)(out). NDH-1 shuttles electrons from NADH, via FMN and iron-sulfur (Fe-S) centers, to quinones in the respiratory chain. The immediate electron acceptor for the enzyme in this species is believed to be a menaquinone. Couples the redox reaction to proton translocation (for every two electrons transferred, four hydrogen ions are translocated across the cytoplasmic membrane), and thus conserves the redox energy in a proton gradient. The sequence is that of NADH-quinone oxidoreductase subunit C from Acidothermus cellulolyticus (strain ATCC 43068 / DSM 8971 / 11B).